The following is a 394-amino-acid chain: Cytochrome b561 and DOMON domain-containing protein At4g12980 (394 aa).

Residues 1–24 (MDSSYLRISLSFLFWALLLSPAVS) form the signal peptide. The region spanning 49 to 169 (LKAILHYSYD…GKVNQVWQVG (121 aa)) is the DOMON domain. A Cytochrome b561 domain is found at 184–381 (GPNLNSVGSL…LEVVTWVIVL (198 aa)). 2 helical membrane passes run 220 to 240 (IHGI…AMIA) and 252 to 272 (AWFY…VAGW). Residues His221, His257, and His290 each contribute to the heme b site. The helical transmembrane segment at 292 to 312 (NIGICLFSIATLQMFAMLLRP) threads the bilayer. His326 contacts heme b. 2 consecutive transmembrane segments (helical) span residues 328–348 (GVGY…LSIL) and 361–381 (VIGT…VIVL).

Requires heme b as cofactor.

Its subcellular location is the membrane. Functionally, may act as a catecholamine-responsive trans-membrane electron transporter. This chain is Cytochrome b561 and DOMON domain-containing protein At4g12980, found in Arabidopsis thaliana (Mouse-ear cress).